Here is a 942-residue protein sequence, read N- to C-terminus: Protein translocase subunit SecA (942 aa).

ATP is bound by residues Q90, 108–112 (GEGKT), and D509.

This sequence belongs to the SecA family. Monomer and homodimer. Part of the essential Sec protein translocation apparatus which comprises SecA, SecYEG and auxiliary proteins SecDF. Other proteins may also be involved.

The protein localises to the cell inner membrane. The protein resides in the cellular thylakoid membrane. It is found in the cytoplasm. It catalyses the reaction ATP + H2O + cellular proteinSide 1 = ADP + phosphate + cellular proteinSide 2.. In terms of biological role, part of the Sec protein translocase complex. Interacts with the SecYEG preprotein conducting channel. Has a central role in coupling the hydrolysis of ATP to the transfer of proteins into and across the cell membrane, serving as an ATP-driven molecular motor driving the stepwise translocation of polypeptide chains across the membrane. Probably participates in protein translocation into and across both the cytoplasmic and thylakoid membranes in cyanobacterial cells. The protein is Protein translocase subunit SecA of Prochlorococcus marinus (strain NATL2A).